A 156-amino-acid chain; its full sequence is Transcription antitermination protein NusB (156 aa).

This sequence belongs to the NusB family.

Its function is as follows. Involved in transcription antitermination. Required for transcription of ribosomal RNA (rRNA) genes. Binds specifically to the boxA antiterminator sequence of the ribosomal RNA (rrn) operons. The sequence is that of Transcription antitermination protein NusB from Bartonella quintana (strain Toulouse) (Rochalimaea quintana).